Reading from the N-terminus, the 192-residue chain is Imidazoleglycerol-phosphate dehydratase (192 aa).

It belongs to the imidazoleglycerol-phosphate dehydratase family.

The protein resides in the cytoplasm. It catalyses the reaction D-erythro-1-(imidazol-4-yl)glycerol 3-phosphate = 3-(imidazol-4-yl)-2-oxopropyl phosphate + H2O. It functions in the pathway amino-acid biosynthesis; L-histidine biosynthesis; L-histidine from 5-phospho-alpha-D-ribose 1-diphosphate: step 6/9. The sequence is that of Imidazoleglycerol-phosphate dehydratase from Staphylococcus aureus (strain MRSA252).